Here is a 390-residue protein sequence, read N- to C-terminus: Flap endonuclease 1-1 (390 aa).

Positions 1–108 (MGIHQLMQFL…GELARRKKLK (108 aa)) are N-domain. Mg(2+) is bound at residue Asp34. Residue Arg74 participates in DNA binding. The Mg(2+) site is built by Asp90, Glu162, Glu164, Asp183, and Asp185. Residues 126–254 (QALLQHQRTT…GTAYKLIKEF (129 aa)) are I-domain. A DNA-binding site is contributed by Glu162. Positions 232 and 234 each coordinate DNA. Asp234 is a binding site for Mg(2+). Residues 348–356 (FQSRLENFF) are interaction with PCNA. Residues 359–390 (TTKIIHPNNSKAKGKANKKNEQTQKSGGKKKI) are disordered.

Belongs to the XPG/RAD2 endonuclease family. FEN1 subfamily. Interacts with PCNA. Three molecules of FEN1 bind to one PCNA trimer with each molecule binding to one PCNA monomer. PCNA stimulates the nuclease activity without altering cleavage specificity. It depends on Mg(2+) as a cofactor. In terms of processing, phosphorylated. Phosphorylation upon DNA damage induces relocalization to the nuclear plasma.

It is found in the nucleus. It localises to the nucleolus. Its subcellular location is the nucleoplasm. The protein resides in the mitochondrion. Functionally, structure-specific nuclease with 5'-flap endonuclease and 5'-3' exonuclease activities involved in DNA replication and repair. During DNA replication, cleaves the 5'-overhanging flap structure that is generated by displacement synthesis when DNA polymerase encounters the 5'-end of a downstream Okazaki fragment. It enters the flap from the 5'-end and then tracks to cleave the flap base, leaving a nick for ligation. Also involved in the long patch base excision repair (LP-BER) pathway, by cleaving within the apurinic/apyrimidinic (AP) site-terminated flap. Acts as a genome stabilization factor that prevents flaps from equilibrating into structures that lead to duplications and deletions. Also possesses 5'-3' exonuclease activity on nicked or gapped double-stranded DNA, and exhibits RNase H activity. Also involved in replication and repair of rDNA and in repairing mitochondrial DNA. The polypeptide is Flap endonuclease 1-1 (Paramecium tetraurelia).